Consider the following 321-residue polypeptide: Olfactory receptor 51G1 (321 aa).

At 1 to 27 (MTILLNSSLQRATFFLTGFQGLEGLHG) the chain is on the extracellular side. N-linked (GlcNAc...) asparagine glycosylation occurs at asparagine 6. Residues 28–48 (WISIPFCFIYLTVILGNLTIL) form a helical membrane-spanning segment. Residues 49-56 (HVICTDAT) lie on the Cytoplasmic side of the membrane. A helical transmembrane segment spans residues 57–77 (LHGPMYYFLGMLAVTDLGLCL). Residues 78-101 (STLPTVLGIFWFDTREIGIPACFT) lie on the Extracellular side of the membrane. Cysteine 99 and cysteine 191 form a disulfide bridge. A helical transmembrane segment spans residues 102-122 (QLFFIHTLSSMESSVLLSMSI). Residues 123–141 (DRYVAVCNPLHDSTVLTPA) lie on the Cytoplasmic side of the membrane. Residues 142–162 (CIVKMGLSSVLRSALLILPLP) traverse the membrane as a helical segment. At 163-198 (FLLKRFQYCHSHVLAHAYCLHLEIMKLACSSIIVNH) the chain is on the extracellular side. The helical transmembrane segment at 199-219 (IYGLFVVACTVGVDSLLIFLS) threads the bilayer. Residues 220 to 239 (YALILRTVLSIASHQERLRA) lie on the Cytoplasmic side of the membrane. Residues 240 to 260 (LNTCVSHICAVLLFYIPMIGL) form a helical membrane-spanning segment. The Extracellular segment spans residues 261-275 (SLVHRFGEHLPRVVH). Residues 276–296 (LFMSYVYLLVPPLMNPIIYSI) traverse the membrane as a helical segment. Residues 297–321 (KTKQIRQRIIKKFQFIKSLRCFWKD) are Cytoplasmic-facing.

Belongs to the G-protein coupled receptor 1 family.

It localises to the cell membrane. Functionally, odorant receptor. The sequence is that of Olfactory receptor 51G1 (OR51G1) from Homo sapiens (Human).